The following is a 442-amino-acid chain: tRNA-2-methylthio-N(6)-dimethylallyladenosine synthase (442 aa).

Positions 2–117 (KSLYIKTYGC…LPELIVKASR (116 aa)) constitute an MTTase N-terminal domain. Residues cysteine 11, cysteine 47, cysteine 80, cysteine 157, cysteine 161, and cysteine 164 each coordinate [4Fe-4S] cluster. One can recognise a Radical SAM core domain in the interval 143-374 (NSQGSSAFLS…QKLINKQQLE (232 aa)). The TRAM domain occupies 377-441 (QSMVGKTIPV…QNSLLGRELQ (65 aa)).

The protein belongs to the methylthiotransferase family. MiaB subfamily. As to quaternary structure, monomer. The cofactor is [4Fe-4S] cluster.

The protein localises to the cytoplasm. The catalysed reaction is N(6)-dimethylallyladenosine(37) in tRNA + (sulfur carrier)-SH + AH2 + 2 S-adenosyl-L-methionine = 2-methylsulfanyl-N(6)-dimethylallyladenosine(37) in tRNA + (sulfur carrier)-H + 5'-deoxyadenosine + L-methionine + A + S-adenosyl-L-homocysteine + 2 H(+). In terms of biological role, catalyzes the methylthiolation of N6-(dimethylallyl)adenosine (i(6)A), leading to the formation of 2-methylthio-N6-(dimethylallyl)adenosine (ms(2)i(6)A) at position 37 in tRNAs that read codons beginning with uridine. This is tRNA-2-methylthio-N(6)-dimethylallyladenosine synthase from Wolbachia sp. subsp. Brugia malayi (strain TRS).